The chain runs to 723 residues: Phenylalanine ammonia-lyase (723 aa).

Y77 functions as the Proton donor/acceptor in the catalytic mechanism. A cross-link (5-imidazolinone (Ala-Gly)) is located at residues 182-184 (ASG). S183 is modified (2,3-didehydroalanine (Ser)). (E)-cinnamate contacts are provided by N241, Q336, R342, N372, K443, E471, and N474.

Belongs to the PAL/histidase family. Post-translationally, contains an active site 4-methylidene-imidazol-5-one (MIO), which is formed autocatalytically by cyclization and dehydration of residues Ala-Ser-Gly.

It is found in the cytoplasm. The enzyme catalyses L-phenylalanine = (E)-cinnamate + NH4(+). It participates in secondary metabolite biosynthesis. The protein operates within phenylpropanoid metabolism; trans-cinnamate biosynthesis; trans-cinnamate from L-phenylalanine: step 1/1. Phenylalanine ammonia-lyase; part of the gene cluster that mediates the biosynthesis of squalestatin S1 (SQS1, also known as zaragozic acid A), a heavily oxidized fungal polyketide that offers potent cholesterol lowering activity by targeting squalene synthase (SS). SQS1 is composed of a 2,8-dioxobicyclic[3.2.1]octane-3,4,5-tricarboxyclic acid core that is connected to two lipophilic polyketide arms. These initial steps feature the priming of an unusual benzoic acid starter unit onto the highly reducing polyketide synthase clz14, followed by oxaloacetate extension and product release to generate a tricarboxylic acid containing product. The phenylalanine ammonia lyase (PAL) clz10 and the acyl-CoA ligase clz12 are involved in transforming phenylalanine into benzoyl-CoA. The citrate synthase-like protein clz17 is involved in connecting the C-alpha-carbons of the hexaketide chain and oxaloacetate to afford the tricarboxylic acid unit. The potential hydrolytic enzymes, clz11 and clz13, are in close proximity to pks2 and may participate in product release. On the other side, the tetraketide arm is synthesized by a the squalestatin tetraketide synthase clz2 and enzymatically esterified to the core in the last biosynthetic step, by the acetyltransferase clz6. The biosynthesis of the tetraketide must involve 3 rounds of chain extension. After the first and second rounds methyl-transfer occurs, and in all rounds of extension the ketoreductase and dehydratase are active. The enoyl reductase and C-MeT of clz2 are not active in the final round of extension. The acetyltransferase clz6 appears to have a broad substrate selectivity for its acyl CoA substrate, allowing the in vitro synthesis of novel squalestatins. The biosynthesis of SQS1 requires several oxidative steps likely performed by oxidoreductases clz3, clz15 and clz16. Finally, in support of the identification of the cluster as being responsible for SQS1 production, the cluster contains a gene encoding a putative squalene synthase (SS) clz20, suggesting a likely mechanism for self-resistance. This Cochliobolus lunatus (Filamentous fungus) protein is Phenylalanine ammonia-lyase.